The primary structure comprises 545 residues: Acetamidase (545 aa).

Active-site charge relay system residues include lysine 130 and serine 205. Serine 229 acts as the Acyl-ester intermediate in catalysis.

It belongs to the amidase family.

It catalyses the reaction a monocarboxylic acid amide + H2O = a monocarboxylate + NH4(+). The catalysed reaction is acetamide + H2O = acetate + NH4(+). Allows acetamide to be used as a sole carbon or nitrogen source. The sequence is that of Acetamidase (amdS) from Aspergillus oryzae (strain ATCC 42149 / RIB 40) (Yellow koji mold).